The chain runs to 886 residues: Protein translocase subunit SecA (886 aa).

ATP is bound by residues Gln-85, 103–107 (GEGKT), and Asp-492. Residues 841–864 (RVVENRYAEEGPKQPARRENKVGR) show a composition bias toward basic and acidic residues. Positions 841–866 (RVVENRYAEEGPKQPARRENKVGRND) are disordered. Cys-868, Cys-870, Cys-879, and Cys-880 together coordinate Zn(2+).

Belongs to the SecA family. In terms of assembly, monomer and homodimer. Part of the essential Sec protein translocation apparatus which comprises SecA, SecYEG and auxiliary proteins SecDF. Other proteins may also be involved. Requires Zn(2+) as cofactor.

The protein localises to the cell membrane. It localises to the cytoplasm. The catalysed reaction is ATP + H2O + cellular proteinSide 1 = ADP + phosphate + cellular proteinSide 2.. Functionally, part of the Sec protein translocase complex. Interacts with the SecYEG preprotein conducting channel. Has a central role in coupling the hydrolysis of ATP to the transfer of proteins into and across the cell membrane, serving as an ATP-driven molecular motor driving the stepwise translocation of polypeptide chains across the membrane. This Pelotomaculum thermopropionicum (strain DSM 13744 / JCM 10971 / SI) protein is Protein translocase subunit SecA.